The following is a 453-amino-acid chain: tRNA modification GTPase MnmE (453 aa).

Residues Arg-22, Glu-79, and Lys-119 each contribute to the (6S)-5-formyl-5,6,7,8-tetrahydrofolate site. The TrmE-type G domain occupies 215–376 (GMKVVIAGRP…LKQHLKSLMG (162 aa)). Asn-225 lines the K(+) pocket. Residues 225–230 (NAGKSS), 244–250 (TEIAGTT), 269–272 (DTAG), and 334–337 (NKAD) each bind GTP. A Mg(2+)-binding site is contributed by Ser-229. Positions 244, 246, and 249 each coordinate K(+). Thr-250 serves as a coordination point for Mg(2+). Residue Lys-453 coordinates (6S)-5-formyl-5,6,7,8-tetrahydrofolate.

This sequence belongs to the TRAFAC class TrmE-Era-EngA-EngB-Septin-like GTPase superfamily. TrmE GTPase family. As to quaternary structure, homodimer. Heterotetramer of two MnmE and two MnmG subunits. It depends on K(+) as a cofactor.

The protein localises to the cytoplasm. Exhibits a very high intrinsic GTPase hydrolysis rate. Involved in the addition of a carboxymethylaminomethyl (cmnm) group at the wobble position (U34) of certain tRNAs, forming tRNA-cmnm(5)s(2)U34. This chain is tRNA modification GTPase MnmE, found in Shewanella denitrificans (strain OS217 / ATCC BAA-1090 / DSM 15013).